A 644-amino-acid polypeptide reads, in one-letter code: Prolyl 3,4-dihydroxylase TPA1 (644 aa).

The region spanning 141–247 (SKTDMSINTY…RLSIQGWYHI (107 aa)) is the Fe2OG dioxygenase domain. The Fe cation site is built by His-159 and Asp-161. 2-oxoglutarate is bound at residue Tyr-173. His-227 is a binding site for Fe cation. Arg-238 contributes to the 2-oxoglutarate binding site. Ser-607 carries the phosphoserine modification.

Belongs to the TPA1 family. As to quaternary structure, monomer and homodimer. Interacts with FRK1, eRF1 (SUP1), eRF3 (SUP35) and polyadenylate-binding protein PAB1. Interacts with ETT1. The cofactor is Fe(2+). Requires L-ascorbate as cofactor.

The protein resides in the nucleus. It catalyses the reaction [ribosomal protein uS12]-L-proline + 2-oxoglutarate + O2 = [ribosomal protein uS12]-(3S)-3-hydroxy-L-proline + succinate + CO2. It carries out the reaction [ribosomal protein uS12]-(3S)-3-hydroxy-L-proline + 2-oxoglutarate + O2 = [ribosomal protein uS12]-(3S)-3,4-dihydroxy-L-proline + succinate + CO2. Functionally, prolyl 3,4-dihydroxylase that catalyzes 3,4-dihydroxylation of 'Pro-64' of small ribosomal subunit uS12 (RPS23A and RPS23B), thereby regulating protein translation termination efficiency. Part of a messenger ribonucleoprotein (mRNP) complex at the 3'-UTR of mRNAs. It associates specifically with components of the translation termination complex and is involved in both translation termination and in regulation of normal mRNA decay through translation termination-coupled poly(A) shortening. This chain is Prolyl 3,4-dihydroxylase TPA1, found in Saccharomyces cerevisiae (strain ATCC 204508 / S288c) (Baker's yeast).